A 190-amino-acid polypeptide reads, in one-letter code: Ganglioside GM2 activator (190 aa).

Positions 1-23 (MQSLMQAPVLIALGLLFAAPAQA) are cleaved as a signal peptide. Cystine bridges form between Cys-36-Cys-180, Cys-96-Cys-103, Cys-109-Cys-135, and Cys-122-Cys-133. Residue Asn-60 is glycosylated (N-linked (GlcNAc...) asparagine).

The protein resides in the lysosome. The catalysed reaction is cholesterol(in) = cholesterol(out). The large binding pocket can accommodate several single chain phospholipids and fatty acids, GM2A also exhibits some calcium-independent phospholipase activity. Binds gangliosides and stimulates ganglioside GM2 degradation. It stimulates only the breakdown of ganglioside GM2 and glycolipid GA2 by beta-hexosaminidase A. It extracts single GM2 molecules from membranes and presents them in soluble form to beta-hexosaminidase A for cleavage of N-acetyl-D-galactosamine and conversion to GM3. Has cholesterol transfer activity. The chain is Ganglioside GM2 activator (GM2A) from Macaca fascicularis (Crab-eating macaque).